Reading from the N-terminus, the 377-residue chain is 2-aminoethylphosphonate--pyruvate transaminase (377 aa).

The residue at position 194 (Lys194) is an N6-(pyridoxal phosphate)lysine.

This sequence belongs to the class-V pyridoxal-phosphate-dependent aminotransferase family. PhnW subfamily. Homodimer. The cofactor is pyridoxal 5'-phosphate.

The enzyme catalyses (2-aminoethyl)phosphonate + pyruvate = phosphonoacetaldehyde + L-alanine. Functionally, involved in phosphonate degradation. The polypeptide is 2-aminoethylphosphonate--pyruvate transaminase (Cupriavidus taiwanensis (strain DSM 17343 / BCRC 17206 / CCUG 44338 / CIP 107171 / LMG 19424 / R1) (Ralstonia taiwanensis (strain LMG 19424))).